A 451-amino-acid chain; its full sequence is 3-phosphoshikimate 1-carboxyvinyltransferase (451 aa).

3-phosphoshikimate-binding residues include Lys28, Ser29, and Arg33. Lys28 is a binding site for phosphoenolpyruvate. Positions 105 and 133 each coordinate phosphoenolpyruvate. Residues Ser178, Gln180, Asp331, and Lys358 each coordinate 3-phosphoshikimate. Position 180 (Gln180) interacts with phosphoenolpyruvate. The Proton acceptor role is filled by Asp331. Phosphoenolpyruvate contacts are provided by Arg362 and Arg406.

It belongs to the EPSP synthase family. Monomer.

Its subcellular location is the cytoplasm. It carries out the reaction 3-phosphoshikimate + phosphoenolpyruvate = 5-O-(1-carboxyvinyl)-3-phosphoshikimate + phosphate. It participates in metabolic intermediate biosynthesis; chorismate biosynthesis; chorismate from D-erythrose 4-phosphate and phosphoenolpyruvate: step 6/7. Catalyzes the transfer of the enolpyruvyl moiety of phosphoenolpyruvate (PEP) to the 5-hydroxyl of shikimate-3-phosphate (S3P) to produce enolpyruvyl shikimate-3-phosphate and inorganic phosphate. The sequence is that of 3-phosphoshikimate 1-carboxyvinyltransferase from Rhodospirillum rubrum (strain ATCC 11170 / ATH 1.1.1 / DSM 467 / LMG 4362 / NCIMB 8255 / S1).